Consider the following 65-residue polypeptide: MKANEYRNLTTAEIEQNVTSLKEELFNLRFQLATGQLETTSRIKQVRKDIARAKTVLRQRELGIG.

It belongs to the universal ribosomal protein uL29 family.

This Brevibacillus brevis (strain 47 / JCM 6285 / NBRC 100599) protein is Large ribosomal subunit protein uL29.